The chain runs to 553 residues: Salicylyl-CoA synthase / salicylate adenylyltransferase (553 aa).

Position 203 (Gly-203) interacts with ATP. 246–247 (HN) serves as a coordination point for substrate. 5 residues coordinate ATP: Gly-320, Val-342, Asp-426, Arg-441, and Lys-533. Substrate is bound at residue Lys-533.

The protein belongs to the ATP-dependent AMP-binding enzyme family.

It carries out the reaction salicylate + ATP + CoA = 2-hydroxybenzoyl-CoA + AMP + diphosphate. Functionally, involved in the degradation of salicylate via a pathway involving coenzyme A derivative. Catalyzes the conversion of salicylate to salicyloyl-CoA via the formation of a salicylate-adenylate intermediate. The substrate specificity is strong, since benzoate, 3-hydroxybenzoate, 4-hydroxybenzoate, gentisate, 2-aminobenzoate, aminobenzoate, salicylamide, salicylaldoxime and 2-hydroxyphenyl acetate cannot substitute for salicylate. The chain is Salicylyl-CoA synthase / salicylate adenylyltransferase from Streptomyces sp.